A 77-amino-acid polypeptide reads, in one-letter code: Small ribosomal subunit protein bS18 (77 aa).

The protein belongs to the bacterial ribosomal protein bS18 family. Part of the 30S ribosomal subunit. Forms a tight heterodimer with protein bS6.

In terms of biological role, binds as a heterodimer with protein bS6 to the central domain of the 16S rRNA, where it helps stabilize the platform of the 30S subunit. The polypeptide is Small ribosomal subunit protein bS18 (Bacillus cereus (strain ATCC 10987 / NRS 248)).